The following is a 90-amino-acid chain: Probable Fe(2+)-trafficking protein (90 aa).

Belongs to the Fe(2+)-trafficking protein family. Monomer.

Functionally, could be a mediator in iron transactions between iron acquisition and iron-requiring processes, such as synthesis and/or repair of Fe-S clusters in biosynthetic enzymes. The polypeptide is Probable Fe(2+)-trafficking protein (Hamiltonella defensa subsp. Acyrthosiphon pisum (strain 5AT)).